A 63-amino-acid chain; its full sequence is Cecropin (63 aa).

Residues 1-23 form the signal peptide; that stretch reads MNFYKIFVFIALILALSVSQSEA. Arg62 is subject to Arginine amide.

As to quaternary structure, monomer. In terms of tissue distribution, hemolymph.

The protein localises to the secreted. In terms of biological role, cecropins have lytic and antibacterial activity against several Gram-negative bacteria. This chain is Cecropin, found in Glossina morsitans morsitans (Savannah tsetse fly).